The following is a 540-amino-acid chain: MNTAVTLLTEQAPQPIEEFGQLERQIIIILDFGSQYSELIARRIRETQVYSEVLSYRTPAEHLRQLNPKGIILSGGPSSVYSDRAPHCDPEIWNLGVPILGVCYGMQLMVNQLGGEVAKADRGEYGKASLHIDDPTDLLTNVEDGTTMWMSHGDSVTKMPPGFEVLAHTDNTPCAAVADHEKKLYGVQFHPEVVHSVGGLALIRNFVYHICECEPTWTTAAFVEEAIREVRAKVGDKRVLLALSGGVDSSTLAFLMHKAIGDQLTCVFIDQGFMRKYEPERLVKLFQEQFHIPVEYVNARDRFLDIMSGVTDPEEKRRRIGHEFIQVFEETSKNLGPFDYLAQGTLYPDVIESADTNVDPQTGERVAVKIKSHHNVGGLPKDLRFKLVEPLRKLFKDEVRKVGRSVGLPEEIVQRQPFPGPGLAIRILGEVTADRLNILRDADLIVRQEINQRGLYNEYWQAFAVLLPIRSVGVMGDQRTYAYPIVLRIVKSEDGMTADWARVPYDVLEAISNRIVNEVKGVNRVVFDITSKPPGTIEWE.

The 191-residue stretch at Ile26–Thr216 folds into the Glutamine amidotransferase type-1 domain. Cys103 (nucleophile) is an active-site residue. Residues His190 and Glu192 contribute to the active site. One can recognise a GMPS ATP-PPase domain in the interval Trp217–Arg415. Ser244 to Ser250 serves as a coordination point for ATP.

In terms of assembly, homodimer.

It carries out the reaction XMP + L-glutamine + ATP + H2O = GMP + L-glutamate + AMP + diphosphate + 2 H(+). It functions in the pathway purine metabolism; GMP biosynthesis; GMP from XMP (L-Gln route): step 1/1. Functionally, catalyzes the synthesis of GMP from XMP. The chain is GMP synthase [glutamine-hydrolyzing] from Nostoc sp. (strain PCC 7120 / SAG 25.82 / UTEX 2576).